A 399-amino-acid chain; its full sequence is Stomatin-like protein 1 (399 aa).

Residues 6-10 (GYRAL) carry the Tyrosine-type lysosomal sorting signal motif. A Phosphoserine modification is found at Ser-28. A helical; Signal-anchor for type III membrane protein transmembrane segment spans residues 58–78 (LVSVLGFLLLLLTFPISGWFA). Over 79 to 399 (LKIVPTYERM…KLEAVLKALK (321 aa)) the chain is Cytoplasmic. The SCP2 domain occupies 288–399 (KQPVAEGLLT…KLEAVLKALK (112 aa)).

This sequence belongs to the band 7/mec-2 family. As to quaternary structure, interacts with STOM; may redistribute STOM from the plasma membrane to late endosomes. In terms of tissue distribution, expressed in dorsal root ganglion neurons.

It is found in the membrane. The protein localises to the cytoplasmic vesicle. The protein resides in the cell membrane. It localises to the late endosome membrane. Its subcellular location is the membrane raft. Its function is as follows. May play a role in cholesterol transfer to late endosomes. May play a role in modulating membrane acid-sensing ion channels. Can specifically inhibit proton-gated current of ASIC1 isoform 1. Can increase inactivation speed of ASIC3. May be involved in regulation of proton sensing in dorsal root ganglions. This chain is Stomatin-like protein 1 (Stoml1), found in Mus musculus (Mouse).